Consider the following 122-residue polypeptide: Small ribosomal subunit protein bS6 (122 aa).

It belongs to the bacterial ribosomal protein bS6 family.

Its function is as follows. Binds together with bS18 to 16S ribosomal RNA. The polypeptide is Small ribosomal subunit protein bS6 (Methylibium petroleiphilum (strain ATCC BAA-1232 / LMG 22953 / PM1)).